Here is a 364-residue protein sequence, read N- to C-terminus: Tyrosine--tRNA ligase (364 aa).

Tyr-39 contacts L-tyrosine. His-49 and Trp-52 together coordinate ATP. Tyr-165, Gln-169, Asp-172, and Gln-187 together coordinate L-tyrosine. Positions 238-242 match the 'KMSKS' region motif; sequence KMSKS. Residue Lys-241 coordinates ATP.

This sequence belongs to the class-I aminoacyl-tRNA synthetase family. TyrS type 4 subfamily. In terms of assembly, homodimer.

It is found in the cytoplasm. The enzyme catalyses tRNA(Tyr) + L-tyrosine + ATP = L-tyrosyl-tRNA(Tyr) + AMP + diphosphate + H(+). Catalyzes the attachment of tyrosine to tRNA(Tyr) in a two-step reaction: tyrosine is first activated by ATP to form Tyr-AMP and then transferred to the acceptor end of tRNA(Tyr). This is Tyrosine--tRNA ligase from Aeropyrum pernix (strain ATCC 700893 / DSM 11879 / JCM 9820 / NBRC 100138 / K1).